A 429-amino-acid chain; its full sequence is Histidinol dehydrogenase (429 aa).

NAD(+) is bound by residues Tyr-130, Gln-191, and Asn-214. Residues Ser-237, Gln-259, and His-262 each contribute to the substrate site. 2 residues coordinate Zn(2+): Gln-259 and His-262. Catalysis depends on proton acceptor residues Glu-327 and His-328. Residues His-328, Asp-361, Glu-415, and His-420 each coordinate substrate. Asp-361 is a Zn(2+) binding site. His-420 provides a ligand contact to Zn(2+).

Belongs to the histidinol dehydrogenase family. Zn(2+) is required as a cofactor.

The enzyme catalyses L-histidinol + 2 NAD(+) + H2O = L-histidine + 2 NADH + 3 H(+). It functions in the pathway amino-acid biosynthesis; L-histidine biosynthesis; L-histidine from 5-phospho-alpha-D-ribose 1-diphosphate: step 9/9. Catalyzes the sequential NAD-dependent oxidations of L-histidinol to L-histidinaldehyde and then to L-histidine. The polypeptide is Histidinol dehydrogenase (Neisseria gonorrhoeae (strain ATCC 700825 / FA 1090)).